The primary structure comprises 326 residues: Homocysteine S-methyltransferase 1 (326 aa).

The Hcy-binding domain occupies 9–323 (LLEDLIEKCG…STIKAISRDL (315 aa)). Residues Cys-241, Cys-308, and Cys-309 each contribute to the Zn(2+) site.

Zn(2+) is required as a cofactor. Expressed in roots, young leaves, florets and flowers. Not detected in old leaves.

The catalysed reaction is S-methyl-L-methionine + L-homocysteine = 2 L-methionine + H(+). Inhibited by L-methionine. Its function is as follows. Catalyzes methyl transfer from S-methylmethionine to homocysteine. The highest preference is for DL-homocysteine &gt;&gt; DL-cysteine. Has no selenocysteine methyltransferase activity. The sequence is that of Homocysteine S-methyltransferase 1 (HMT1) from Brassica oleracea var. italica (Broccoli).